We begin with the raw amino-acid sequence, 450 residues long: Ribosomal protein uS12 methylthiotransferase RimO (450 aa).

The MTTase N-terminal domain occupies 16-126; it reads PRISFVSLGC…VLDAVHQAVP (111 aa). [4Fe-4S] cluster contacts are provided by cysteine 25, cysteine 61, cysteine 90, cysteine 157, cysteine 161, and cysteine 164. The Radical SAM core domain maps to 143-380; the sequence is LTPRHYAYLK…MLKQQAISAR (238 aa). Residues 383–449 enclose the TRAM domain; sequence KRKVGTRQQV…AYDLIGSAVG (67 aa).

This sequence belongs to the methylthiotransferase family. RimO subfamily. [4Fe-4S] cluster is required as a cofactor.

Its subcellular location is the cytoplasm. It catalyses the reaction L-aspartate(89)-[ribosomal protein uS12]-hydrogen + (sulfur carrier)-SH + AH2 + 2 S-adenosyl-L-methionine = 3-methylsulfanyl-L-aspartate(89)-[ribosomal protein uS12]-hydrogen + (sulfur carrier)-H + 5'-deoxyadenosine + L-methionine + A + S-adenosyl-L-homocysteine + 2 H(+). Functionally, catalyzes the methylthiolation of an aspartic acid residue of ribosomal protein uS12. This Azorhizobium caulinodans (strain ATCC 43989 / DSM 5975 / JCM 20966 / LMG 6465 / NBRC 14845 / NCIMB 13405 / ORS 571) protein is Ribosomal protein uS12 methylthiotransferase RimO.